A 438-amino-acid polypeptide reads, in one-letter code: Phosphoribosylamine--glycine ligase (438 aa).

Positions 107–319 (RKLFEDYDIP…LAKISKQIVD (213 aa)) constitute an ATP-grasp domain. 134 to 197 (IDNFDEPVVV…EELLLGEEYT (64 aa)) lines the ATP pocket. The Mg(2+) site is built by Q277, E289, and N291. Q277, E289, and N291 together coordinate Mn(2+).

The protein belongs to the GARS family. It depends on Mg(2+) as a cofactor. The cofactor is Mn(2+).

The catalysed reaction is 5-phospho-beta-D-ribosylamine + glycine + ATP = N(1)-(5-phospho-beta-D-ribosyl)glycinamide + ADP + phosphate + H(+). It functions in the pathway purine metabolism; IMP biosynthesis via de novo pathway; N(1)-(5-phospho-D-ribosyl)glycinamide from 5-phospho-alpha-D-ribose 1-diphosphate: step 2/2. This Methanosphaera stadtmanae (strain ATCC 43021 / DSM 3091 / JCM 11832 / MCB-3) protein is Phosphoribosylamine--glycine ligase.